The following is a 169-amino-acid chain: Lipoprotein signal peptidase (169 aa).

4 consecutive transmembrane segments (helical) span residues 4–24 (PICS…IVDL), 42–62 (LIPF…SFLA), 70–90 (WFFA…MYRS), and 102–122 (ALII…GAVI). Active-site residues include Asp-123 and Asp-141. A helical transmembrane segment spans residues 137 to 157 (FNIADTAICIGAALVIFEGFI).

Belongs to the peptidase A8 family.

Its subcellular location is the cell inner membrane. The catalysed reaction is Release of signal peptides from bacterial membrane prolipoproteins. Hydrolyzes -Xaa-Yaa-Zaa-|-(S,diacylglyceryl)Cys-, in which Xaa is hydrophobic (preferably Leu), and Yaa (Ala or Ser) and Zaa (Gly or Ala) have small, neutral side chains.. Its pathway is protein modification; lipoprotein biosynthesis (signal peptide cleavage). Functionally, this protein specifically catalyzes the removal of signal peptides from prolipoproteins. In Yersinia enterocolitica serotype O:8 / biotype 1B (strain NCTC 13174 / 8081), this protein is Lipoprotein signal peptidase.